The primary structure comprises 353 residues: UDP-3-O-acylglucosamine N-acyltransferase (353 aa).

Residue H242 is the Proton acceptor of the active site.

It belongs to the transferase hexapeptide repeat family. LpxD subfamily. Homotrimer.

The enzyme catalyses a UDP-3-O-[(3R)-3-hydroxyacyl]-alpha-D-glucosamine + a (3R)-hydroxyacyl-[ACP] = a UDP-2-N,3-O-bis[(3R)-3-hydroxyacyl]-alpha-D-glucosamine + holo-[ACP] + H(+). Its pathway is bacterial outer membrane biogenesis; LPS lipid A biosynthesis. Its function is as follows. Catalyzes the N-acylation of UDP-3-O-acylglucosamine using 3-hydroxyacyl-ACP as the acyl donor. Is involved in the biosynthesis of lipid A, a phosphorylated glycolipid that anchors the lipopolysaccharide to the outer membrane of the cell. This Pseudomonas paraeruginosa (strain DSM 24068 / PA7) (Pseudomonas aeruginosa (strain PA7)) protein is UDP-3-O-acylglucosamine N-acyltransferase.